A 113-amino-acid polypeptide reads, in one-letter code: Hydrogenase maturation factor HypA (113 aa).

Ni(2+) is bound at residue histidine 2. The Zn(2+) site is built by cysteine 73, cysteine 76, cysteine 89, and cysteine 92.

The protein belongs to the HypA/HybF family.

Functionally, involved in the maturation of [NiFe] hydrogenases. Required for nickel insertion into the metal center of the hydrogenase. This chain is Hydrogenase maturation factor HypA, found in Actinobacillus succinogenes (strain ATCC 55618 / DSM 22257 / CCUG 43843 / 130Z).